The following is a 404-amino-acid chain: Histidinol dehydrogenase (404 aa).

The NAD(+) site is built by tyrosine 114, glutamine 176, and asparagine 199. Substrate is bound by residues serine 222, glutamine 244, and histidine 247. 2 residues coordinate Zn(2+): glutamine 244 and histidine 247. Residues glutamate 300 and histidine 301 each act as proton acceptor in the active site. Positions 301, 334, 388, and 393 each coordinate substrate. Residue aspartate 334 coordinates Zn(2+). Residue histidine 393 participates in Zn(2+) binding.

It belongs to the histidinol dehydrogenase family. It depends on Zn(2+) as a cofactor.

It carries out the reaction L-histidinol + 2 NAD(+) + H2O = L-histidine + 2 NADH + 3 H(+). The protein operates within amino-acid biosynthesis; L-histidine biosynthesis; L-histidine from 5-phospho-alpha-D-ribose 1-diphosphate: step 9/9. Functionally, catalyzes the sequential NAD-dependent oxidations of L-histidinol to L-histidinaldehyde and then to L-histidine. The protein is Histidinol dehydrogenase (hisD) of Archaeoglobus fulgidus (strain ATCC 49558 / DSM 4304 / JCM 9628 / NBRC 100126 / VC-16).